Reading from the N-terminus, the 390-residue chain is Phosphoglycerate kinase (390 aa).

Substrate-binding positions include 19 to 21, Arg34, 57 to 60, Arg115, and Arg148; these read DYN and HLGR. Residues Lys198, Gly289, Glu320, and 347-350 contribute to the ATP site; that span reads GGDS.

It belongs to the phosphoglycerate kinase family. In terms of assembly, monomer.

It is found in the cytoplasm. The catalysed reaction is (2R)-3-phosphoglycerate + ATP = (2R)-3-phospho-glyceroyl phosphate + ADP. It participates in carbohydrate degradation; glycolysis; pyruvate from D-glyceraldehyde 3-phosphate: step 2/5. The protein is Phosphoglycerate kinase of Thermus thermophilus (strain ATCC BAA-163 / DSM 7039 / HB27).